Here is a 233-residue protein sequence, read N- to C-terminus: Ribosome-recycling factor, mitochondrial (233 aa).

Belongs to the RRF family.

It is found in the mitochondrion. Necessary for protein synthesis in mitochondria. Functions as a ribosome recycling factor in mitochondria. In Candida glabrata (strain ATCC 2001 / BCRC 20586 / JCM 3761 / NBRC 0622 / NRRL Y-65 / CBS 138) (Yeast), this protein is Ribosome-recycling factor, mitochondrial (RRF1).